We begin with the raw amino-acid sequence, 166 residues long: Lipoprotein signal peptidase (166 aa).

4 helical membrane passes run 9–29 (ASGA…FDQL), 45–65 (ALTS…FGFL), 71–91 (WQRW…CFLL), and 100–120 (FSVS…DRLV). Residues D126 and D144 contribute to the active site. A helical membrane pass occupies residues 135–155 (WHFPAFNLADSAITIGAVLLI).

It belongs to the peptidase A8 family.

Its subcellular location is the cell inner membrane. The catalysed reaction is Release of signal peptides from bacterial membrane prolipoproteins. Hydrolyzes -Xaa-Yaa-Zaa-|-(S,diacylglyceryl)Cys-, in which Xaa is hydrophobic (preferably Leu), and Yaa (Ala or Ser) and Zaa (Gly or Ala) have small, neutral side chains.. Its pathway is protein modification; lipoprotein biosynthesis (signal peptide cleavage). Functionally, this protein specifically catalyzes the removal of signal peptides from prolipoproteins. The sequence is that of Lipoprotein signal peptidase from Burkholderia cenocepacia (strain ATCC BAA-245 / DSM 16553 / LMG 16656 / NCTC 13227 / J2315 / CF5610) (Burkholderia cepacia (strain J2315)).